A 772-amino-acid polypeptide reads, in one-letter code: Ion-translocating oxidoreductase complex subunit C (772 aa).

4Fe-4S ferredoxin-type domains are found at residues Gly369–Tyr397 and Lys407–Phe436. [4Fe-4S] cluster contacts are provided by Cys377, Cys380, Cys383, Cys387, Cys416, Cys419, Cys422, and Cys426. The disordered stretch occupies residues Lys599–Lys748.

It belongs to the 4Fe4S bacterial-type ferredoxin family. RnfC subfamily. As to quaternary structure, the complex is composed of six subunits: RsxA, RsxB, RsxC, RsxD, RsxE and RsxG. The cofactor is [4Fe-4S] cluster.

The protein localises to the cell inner membrane. In terms of biological role, part of a membrane-bound complex that couples electron transfer with translocation of ions across the membrane. Required to maintain the reduced state of SoxR. The protein is Ion-translocating oxidoreductase complex subunit C of Shigella dysenteriae serotype 1 (strain Sd197).